Here is a 216-residue protein sequence, read N- to C-terminus: Probable GTP-binding protein EngB (216 aa).

One can recognise an EngB-type G domain in the interval 27–201; sequence EGIEVAFAGR…REKLDTWFSE (175 aa). Residues 35–42, 62–66, 80–83, 147–150, and 180–182 each bind GTP; these read GRSNAGKS, GRTQL, DLPG, TKAD, and FSS. Residues serine 42 and threonine 64 each coordinate Mg(2+).

This sequence belongs to the TRAFAC class TrmE-Era-EngA-EngB-Septin-like GTPase superfamily. EngB GTPase family. It depends on Mg(2+) as a cofactor.

Functionally, necessary for normal cell division and for the maintenance of normal septation. The polypeptide is Probable GTP-binding protein EngB (Yersinia pseudotuberculosis serotype O:1b (strain IP 31758)).